The sequence spans 540 residues: Decreased expression in renal and prostate cancer protein (540 aa).

A compositionally biased stretch (basic and acidic residues) spans 1 to 12 (MKEPRIFPRERP). Disordered stretches follow at residues 1-264 (MKEP…DARA) and 304-389 (SQAS…AFSQ). Low complexity-rich tracts occupy residues 113-125 (PRPGGLLGPSPGS) and 180-192 (GPSLRAGVLLTPG). The segment covering 304-316 (SQASGNMGTSPSS) has biased composition (polar residues). A Phosphoserine modification is found at S313. Low complexity predominate over residues 321–330 (PGPIGPNSGP). Position 375 is an asymmetric dimethylarginine (R375). R403 carries the omega-N-methylarginine modification. S439 carries the post-translational modification Phosphoserine. Positions 516 to 540 (GTNPAAFPRPGGPMAAMYPNGMLPP) are disordered.

It belongs to the DERPC family.

Its subcellular location is the nucleus. In terms of biological role, potential tumor suppressor. This is Decreased expression in renal and prostate cancer protein from Bos taurus (Bovine).